The chain runs to 349 residues: GTP 3',8-cyclase (349 aa).

The Radical SAM core domain maps to 26 to 245; the sequence is GFGRAVTYLR…SSFWTLTDIP (220 aa). R35 serves as a coordination point for GTP. [4Fe-4S] cluster is bound by residues C42 and C46. Position 48 (Y48) interacts with S-adenosyl-L-methionine. [4Fe-4S] cluster is bound at residue C49. R84 is a GTP binding site. G88 contacts S-adenosyl-L-methionine. GTP is bound at residue T118. S142 serves as a coordination point for S-adenosyl-L-methionine. Residue K178 participates in GTP binding. S-adenosyl-L-methionine is bound at residue M212. C275 and C278 together coordinate [4Fe-4S] cluster. GTP is bound at residue 280–282; it reads RVR. C292 provides a ligand contact to [4Fe-4S] cluster.

The protein belongs to the radical SAM superfamily. MoaA family. In terms of assembly, monomer and homodimer. [4Fe-4S] cluster serves as cofactor.

The enzyme catalyses GTP + AH2 + S-adenosyl-L-methionine = (8S)-3',8-cyclo-7,8-dihydroguanosine 5'-triphosphate + 5'-deoxyadenosine + L-methionine + A + H(+). Its pathway is cofactor biosynthesis; molybdopterin biosynthesis. In terms of biological role, catalyzes the cyclization of GTP to (8S)-3',8-cyclo-7,8-dihydroguanosine 5'-triphosphate. The sequence is that of GTP 3',8-cyclase from Caulobacter vibrioides (strain ATCC 19089 / CIP 103742 / CB 15) (Caulobacter crescentus).